The chain runs to 466 residues: Soluble pyridine nucleotide transhydrogenase (466 aa).

Residue 36–45 (EKESSVGGGC) coordinates FAD.

Belongs to the class-I pyridine nucleotide-disulfide oxidoreductase family. FAD is required as a cofactor.

The protein localises to the cytoplasm. The enzyme catalyses NAD(+) + NADPH = NADH + NADP(+). Its function is as follows. Conversion of NADPH, generated by peripheral catabolic pathways, to NADH, which can enter the respiratory chain for energy generation. In Vibrio vulnificus (strain CMCP6), this protein is Soluble pyridine nucleotide transhydrogenase.